Consider the following 525-residue polypeptide: Putative ribose/galactose/methyl galactoside import ATP-binding protein (525 aa).

Residues 1–20 (MSGSATASPPAKPDLPSSDG) form a disordered region. 2 ABC transporter domains span residues 33 to 269 (LEIS…VGRE) and 279 to 523 (KPAG…SGHR). Position 65–72 (65–72 (GENGAGKS)) interacts with ATP.

This sequence belongs to the ABC transporter superfamily. Carbohydrate importer 2 (CUT2) (TC 3.A.1.2) family.

The protein localises to the cell inner membrane. The enzyme catalyses D-ribose(out) + ATP + H2O = D-ribose(in) + ADP + phosphate + H(+). It carries out the reaction D-galactose(out) + ATP + H2O = D-galactose(in) + ADP + phosphate + H(+). Part of an ABC transporter complex involved in carbohydrate import. Could be involved in ribose, galactose and/or methyl galactoside import. Responsible for energy coupling to the transport system. The chain is Putative ribose/galactose/methyl galactoside import ATP-binding protein from Pseudomonas syringae pv. tomato (strain ATCC BAA-871 / DC3000).